A 265-amino-acid chain; its full sequence is tRNA pseudouridine synthase A (265 aa).

The Nucleophile role is filled by aspartate 58. Tyrosine 116 is a binding site for substrate.

Belongs to the tRNA pseudouridine synthase TruA family. Homodimer.

It catalyses the reaction uridine(38/39/40) in tRNA = pseudouridine(38/39/40) in tRNA. Functionally, formation of pseudouridine at positions 38, 39 and 40 in the anticodon stem and loop of transfer RNAs. The sequence is that of tRNA pseudouridine synthase A from Neisseria gonorrhoeae (strain ATCC 700825 / FA 1090).